Reading from the N-terminus, the 273-residue chain is Tryptase (273 aa).

The first 18 residues, 1-18 (MLKLLLLTLPLLSSLVHA), serve as a signal peptide directing secretion. A propeptide spans 19–28 (APSLAMPREG) (activation peptide). The region spanning 29 to 270 (IVGGQEASGN…YLDWIYRYVP (242 aa)) is the Peptidase S1 domain. Asparagine 49 carries N-linked (GlcNAc...) asparagine glycosylation. Cysteines 57 and 73 form a disulfide. Active-site charge relay system residues include histidine 72 and aspartate 119. Disulfide bonds link cysteine 153/cysteine 228, cysteine 186/cysteine 209, and cysteine 218/cysteine 246. The active-site Charge relay system is the serine 222.

The protein belongs to the peptidase S1 family. Tryptase subfamily. Homotetramer. In terms of processing, glycosylated. As to expression, mast cells.

It localises to the secreted. The catalysed reaction is Preferential cleavage: Arg-|-Xaa, Lys-|-Xaa, but with more restricted specificity than trypsin.. Tryptase is the major neutral protease present in mast cells and is secreted upon the coupled activation-degranulation response of this cell type. May play a role in innate immunity. This chain is Tryptase (Tpsab1), found in Rattus norvegicus (Rat).